The following is a 645-amino-acid chain: 1,4-alpha-glucan branching enzyme GlgB (645 aa).

The active-site Nucleophile is aspartate 309. Glutamate 352 (proton donor) is an active-site residue. Residues 619 to 645 (VKTRKGSKKQDGSKTKVRSNVTSRGKR) are disordered. Over residues 636 to 645 (RSNVTSRGKR) the composition is skewed to polar residues.

Belongs to the glycosyl hydrolase 13 family. GlgB subfamily. As to quaternary structure, monomer.

It carries out the reaction Transfers a segment of a (1-&gt;4)-alpha-D-glucan chain to a primary hydroxy group in a similar glucan chain.. Its pathway is glycan biosynthesis; glycogen biosynthesis. Functionally, catalyzes the formation of the alpha-1,6-glucosidic linkages in glycogen by scission of a 1,4-alpha-linked oligosaccharide from growing alpha-1,4-glucan chains and the subsequent attachment of the oligosaccharide to the alpha-1,6 position. This is 1,4-alpha-glucan branching enzyme GlgB from Bacillus cereus (strain B4264).